The following is a 650-amino-acid chain: Macrolide export ATP-binding/permease protein MacB (650 aa).

An ABC transporter domain is found at 2–238 (IDIKGIRKSY…PTTAQEKRQE (237 aa)). 38–45 (GPSGSGKS) contributes to the ATP binding site. Transmembrane regions (helical) follow at residues 267–287 (GLSM…LALG), 531–551 (IAAI…LVSV), 580–600 (IVVS…FSLL), and 610–630 (VVSA…GIVF).

It belongs to the ABC transporter superfamily. Macrolide exporter (TC 3.A.1.122) family. Homodimer.

It is found in the cell inner membrane. In terms of biological role, non-canonical ABC transporter that contains transmembrane domains (TMD), which form a pore in the inner membrane, and an ATP-binding domain (NBD), which is responsible for energy generation. Confers resistance against macrolides. The polypeptide is Macrolide export ATP-binding/permease protein MacB (Bdellovibrio bacteriovorus (strain ATCC 15356 / DSM 50701 / NCIMB 9529 / HD100)).